The sequence spans 416 residues: Probable glucan 1,3-beta-glucosidase A (416 aa).

The first 22 residues, 1 to 22 (MIFKFSQKALVALCLVVGLAEA), serve as a signal peptide directing secretion. Glu211 acts as the Proton donor in catalysis. 2 cysteine pairs are disulfide-bonded: Cys291–Cys415 and Cys316–Cys342. The active-site Nucleophile is Glu308.

Belongs to the glycosyl hydrolase 5 (cellulase A) family. In terms of assembly, monomer. It depends on Mn(2+) as a cofactor.

Its subcellular location is the secreted. It catalyses the reaction Successive hydrolysis of beta-D-glucose units from the non-reducing ends of (1-&gt;3)-beta-D-glucans, releasing alpha-glucose.. Its function is as follows. Beta-glucanases participate in the metabolism of beta-glucan, the main structural component of the cell wall. It could also function biosynthetically as a transglycosylase. In Neosartorya fischeri (strain ATCC 1020 / DSM 3700 / CBS 544.65 / FGSC A1164 / JCM 1740 / NRRL 181 / WB 181) (Aspergillus fischerianus), this protein is Probable glucan 1,3-beta-glucosidase A (exgA).